A 495-amino-acid chain; its full sequence is Lysine--tRNA ligase (495 aa).

Positions 406 and 413 each coordinate Mg(2+).

The protein belongs to the class-II aminoacyl-tRNA synthetase family. Homodimer. Requires Mg(2+) as cofactor.

Its subcellular location is the cytoplasm. It catalyses the reaction tRNA(Lys) + L-lysine + ATP = L-lysyl-tRNA(Lys) + AMP + diphosphate. In Leptospira interrogans serogroup Icterohaemorrhagiae serovar Lai (strain 56601), this protein is Lysine--tRNA ligase.